The chain runs to 174 residues: uncharacterized protein (174 aa).

An N-acetyltransferase domain is found at 42-174 (SNTKNINLYE…GVKGMFWYPR (133 aa)).

It belongs to the acetyltransferase family. Ycf52 subfamily.

It is found in the plastid. The protein localises to the chloroplast. This is an uncharacterized protein from Porphyra purpurea (Red seaweed).